Reading from the N-terminus, the 828-residue chain is Periplasmic nitrate reductase (828 aa).

Residues 1–31 (MKLSRRSFMKANAVAAAAAAAGLSVPGVARA) constitute a signal peptide (tat-type signal). In terms of domain architecture, 4Fe-4S Mo/W bis-MGD-type spans 39-95 (IKWDKAPCRFCGTGCGVLVGTQQGRVVACQGDPDAPVNRGLNCIKGYFLPKIMYGKD). [4Fe-4S] cluster contacts are provided by C46, C49, C53, and C81. Mo-bis(molybdopterin guanine dinucleotide) is bound by residues K83, Q150, N175, C179, 212-219 (WGSNMAEM), 243-247 (STFQH), 262-264 (QSD), M372, Q376, N482, 508-509 (SD), K531, D558, and 718-727 (TGRVLEHWHT). Residue F794 participates in substrate binding. Mo-bis(molybdopterin guanine dinucleotide) contacts are provided by N802 and K819.

This sequence belongs to the prokaryotic molybdopterin-containing oxidoreductase family. NasA/NapA/NarB subfamily. In terms of assembly, component of the periplasmic nitrate reductase NapAB complex composed of NapA and NapB. The cofactor is [4Fe-4S] cluster. It depends on Mo-bis(molybdopterin guanine dinucleotide) as a cofactor. Predicted to be exported by the Tat system. The position of the signal peptide cleavage has not been experimentally proven.

The protein localises to the periplasm. The catalysed reaction is 2 Fe(II)-[cytochrome] + nitrate + 2 H(+) = 2 Fe(III)-[cytochrome] + nitrite + H2O. In terms of biological role, catalytic subunit of the periplasmic nitrate reductase complex NapAB. Receives electrons from NapB and catalyzes the reduction of nitrate to nitrite. The polypeptide is Periplasmic nitrate reductase (Salmonella arizonae (strain ATCC BAA-731 / CDC346-86 / RSK2980)).